The following is a 363-amino-acid chain: Dihydroorotate dehydrogenase (quinone) (363 aa).

FMN-binding positions include 70–74 and T94; that span reads AGFDK. K74 serves as a coordination point for substrate. 119 to 123 serves as a coordination point for substrate; sequence NRMGF. FMN-binding residues include N147 and N180. Position 180 (N180) interacts with substrate. S183 (nucleophile) is an active-site residue. N185 is a binding site for substrate. The FMN site is built by K216 and T244. 245–246 contributes to the substrate binding site; sequence NT. Residues G270, G299, and 320–321 contribute to the FMN site; that span reads YT.

The protein belongs to the dihydroorotate dehydrogenase family. Type 2 subfamily. Monomer. Requires FMN as cofactor.

The protein localises to the cell membrane. The catalysed reaction is (S)-dihydroorotate + a quinone = orotate + a quinol. It functions in the pathway pyrimidine metabolism; UMP biosynthesis via de novo pathway; orotate from (S)-dihydroorotate (quinone route): step 1/1. Functionally, catalyzes the conversion of dihydroorotate to orotate with quinone as electron acceptor. The sequence is that of Dihydroorotate dehydrogenase (quinone) from Corynebacterium diphtheriae (strain ATCC 700971 / NCTC 13129 / Biotype gravis).